Reading from the N-terminus, the 357-residue chain is Cytoplasmic tRNA 2-thiolation protein 1 (357 aa).

Residues 314 to 348 (GVSRTRGRRGEKAGLHPDVGRGGGGGSSGPAEVAS) are disordered. The span at 321–332 (RRGEKAGLHPDV) shows a compositional bias: basic and acidic residues.

This sequence belongs to the TtcA family. CTU1/NCS6/ATPBD3 subfamily.

Its subcellular location is the cytoplasm. It participates in tRNA modification; 5-methoxycarbonylmethyl-2-thiouridine-tRNA biosynthesis. In terms of biological role, plays a central role in 2-thiolation of mcm(5)S(2)U at tRNA wobble positions of tRNA(Lys), tRNA(Glu) and tRNA(Gln). Directly binds tRNAs and probably acts by catalyzing adenylation of tRNAs, an intermediate required for 2-thiolation. It is unclear whether it acts as a sulfurtransferase that transfers sulfur from thiocarboxylated URM1 onto the uridine of tRNAs at wobble position. The polypeptide is Cytoplasmic tRNA 2-thiolation protein 1 (Chlamydomonas reinhardtii (Chlamydomonas smithii)).